The primary structure comprises 813 residues: Protein mac-1 (813 aa).

Coiled-coil stretches lie at residues 58-89 and 122-152; these read VREALERIQLVAKEENDEKMEEKEAMDDVQEI and SDDSEDERAARQLEKQIESLKTNRANKTVLN. 2 disordered regions span residues 97–131 and 152–193; these read TRKRKAPAAGRKSTGQAAAAKEVVLSDDSEDERAA and NLYT…GAVS. Over residues 158 to 172 the composition is skewed to polar residues; the sequence is SAPSTPVSTPKNQAT. A compositionally biased stretch (low complexity) spans 175 to 191; that stretch reads PPGASAAPPALPRGLGA. Residues 246-253 and 575-582 each bind ATP; these read GPPGCGKT.

It belongs to the AAA ATPase family. Found in a complex composed of ced-3, ced-4 and mac-1 or of ced-9, ced-4 and mac-1. Within the complex, interacts with ced-4.

In terms of biological role, probably together with ced-9, plays a modest role in preventing ced-4 and caspase ced-3-mediated apoptosis. In Caenorhabditis elegans, this protein is Protein mac-1.